Reading from the N-terminus, the 458-residue chain is Preferentially expressed antigen in melanoma-like protein 1 (458 aa).

The LRR 1; degenerate repeat unit spans residues 99 to 126 (RCKLQVLDLRVMPLKLWNRLPVFGTAGC). The stretch at 176–200 (SLCCCKLQIWAMSMYYHRKLLEILD) is one LRR 2; degenerate repeat. The stretch at 201–227 (LDSVQELRMYCISNPVCLLNFAPYLGR) is one LRR 3; degenerate repeat. One copy of the LRR 4; degenerate repeat lies at 228–263 (MRNLRCLILSHLWQTFSMTPVEKQQVITQFTSQFLK). LRR repeat units lie at residues 264 to 289 (LKCLQILHLDTVFFLEGHLDELFWWL), 290 to 321 (KTPLETLSVIDCNLSKSDWFHISEFQCTSQLK), 322 to 340 (HLNLKWVKLTHLSPEPLRV), 346 to 373 (ASTLTSLDLEGCQMMDSQLSAILPALRC), and 374 to 398 (CTQLTKFNFHGNYISMPILRELAYN).

The protein belongs to the PRAME family. Specifically expressed in testis (at protein level).

The protein resides in the cytoplasm. It is found in the cytoplasmic vesicle. Its subcellular location is the secretory vesicle. It localises to the acrosome. The protein localises to the cell projection. The protein resides in the cilium. It is found in the flagellum. Functionally, may play a role in acrosome development and also in sperm maturation and motility. The protein is Preferentially expressed antigen in melanoma-like protein 1 of Mus musculus (Mouse).